Reading from the N-terminus, the 231-residue chain is LexA repressor (231 aa).

The interval 1-24 (MTDRKEHKMKPGRRPTEGMTPSQE) is disordered. The H-T-H motif DNA-binding region spans 43 to 62 (VKEIAEALGMKTPSAHEQVQ). Active-site for autocatalytic cleavage activity residues include Ser-146 and Lys-183.

This sequence belongs to the peptidase S24 family. As to quaternary structure, homodimer.

It catalyses the reaction Hydrolysis of Ala-|-Gly bond in repressor LexA.. In terms of biological role, represses a number of genes involved in the response to DNA damage (SOS response), including recA and lexA. In the presence of single-stranded DNA, RecA interacts with LexA causing an autocatalytic cleavage which disrupts the DNA-binding part of LexA, leading to derepression of the SOS regulon and eventually DNA repair. The sequence is that of LexA repressor from Magnetococcus marinus (strain ATCC BAA-1437 / JCM 17883 / MC-1).